Here is a 348-residue protein sequence, read N- to C-terminus: Dihydroorotase (348 aa).

The Zn(2+) site is built by H17 and H19. Residues 19–21 (HLR) and N45 each bind substrate. Positions 103, 140, and 178 each coordinate Zn(2+). Position 103 is an N6-carboxylysine (K103). A substrate-binding site is contributed by H140. L223 provides a ligand contact to substrate. Residue D251 coordinates Zn(2+). D251 is an active-site residue. The substrate site is built by H255 and A267.

Belongs to the metallo-dependent hydrolases superfamily. DHOase family. Class II DHOase subfamily. Homodimer. The cofactor is Zn(2+).

The enzyme catalyses (S)-dihydroorotate + H2O = N-carbamoyl-L-aspartate + H(+). The protein operates within pyrimidine metabolism; UMP biosynthesis via de novo pathway; (S)-dihydroorotate from bicarbonate: step 3/3. Its function is as follows. Catalyzes the reversible cyclization of carbamoyl aspartate to dihydroorotate. The protein is Dihydroorotase of Escherichia coli O17:K52:H18 (strain UMN026 / ExPEC).